The primary structure comprises 395 residues: GDP-mannose 4,6 dehydratase (395 aa).

Composition is skewed to polar residues over residues 1–13 (MLNT…STSD) and 24–36 (ESSS…QNGT). The interval 1-44 (MLNTRLIAMSTSDGAPETKKQRPESSSNGSKDQNGTEAGAEGDS) is disordered. Residues 53–58 (GITGQD), 109–110 (DM), 131–135 (LAAQS), and Tyr-146 contribute to the NADP(+) site. Thr-178 is an active-site residue. Catalysis depends on nucleophile residues Glu-180 and Tyr-202. Lys-206, His-232, and Arg-237 together coordinate NADP(+).

Belongs to the NAD(P)-dependent epimerase/dehydratase family. GDP-mannose 4,6-dehydratase subfamily. Requires NADP(+) as cofactor.

The catalysed reaction is GDP-alpha-D-mannose = GDP-4-dehydro-alpha-D-rhamnose + H2O. The protein operates within nucleotide-sugar biosynthesis; GDP-L-fucose biosynthesis via de novo pathway; GDP-L-fucose from GDP-alpha-D-mannose: step 1/2. Functionally, catalyzes the conversion of GDP-D-mannose to GDP-4-dehydro-6-deoxy-D-mannose (also known as GDP-4-keto-6-deoxy-D-mannose or GDP-4-dehydro-alpha-D-rhamnose), an essential step in the synthesis of GDP-fucose from GDP-mannose. This Drosophila melanogaster (Fruit fly) protein is GDP-mannose 4,6 dehydratase (Gmd).